The chain runs to 950 residues: Protocadherin alpha-6 (950 aa).

An N-terminal signal peptide occupies residues 1 to 29 (MVFTPEDRLGKQCLLLPLLLLAAWKVGSG). Residues 30 to 697 (QLHYSVPEEA…GPEAALVDVN (668 aa)) lie on the Extracellular side of the membrane. 6 consecutive Cadherin domains span residues 34–133 (SVPE…PPLF), 157–242 (ASDA…APTF), 243–350 (EQSE…VPEI), 351–455 (ALTS…APAF), 456–565 (AQPE…APAL), and 581–678 (VPRS…APKA). N-linked (GlcNAc...) asparagine glycosylation is found at asparagine 257, asparagine 265, asparagine 386, and asparagine 548. Residues 698-718 (VYLIIAICAVSSLLVLTLLLY) traverse the membrane as a helical segment. Residues 719-950 (TALRCSAPPT…GNSTTDNSDQ (232 aa)) are Cytoplasmic-facing. PXXP repeat units lie at residues 799–802 (PRQP), 832–835 (PGGP), 873–876 (PGNP), and 891–894 (PGSP). The interval 799 to 894 (PRQPNPDWRY…PDKFIIPGSP (96 aa)) is 4 X 4 AA repeats of P-X-X-P. A disordered region spans residues 830 to 950 (AGPGGPDQQW…GNSTTDNSDQ (121 aa)). Basic and acidic residues predominate over residues 909–923 (DKSDFITFGKKEETK).

The protein localises to the cell membrane. The protein resides in the secreted. Functionally, potential calcium-dependent cell-adhesion protein. May be involved in the establishment and maintenance of specific neuronal connections in the brain. The sequence is that of Protocadherin alpha-6 (PCDHA6) from Homo sapiens (Human).